A 390-amino-acid polypeptide reads, in one-letter code: Probable tRNA sulfurtransferase (390 aa).

Residues 58–161 enclose the THUMP domain; it reads EAVARRLQRV…DEGAYIYSRI (104 aa). ATP is bound by residues 179–180, 204–205, Arg261, Gly283, and Gln292; these read LI and HF.

Belongs to the ThiI family.

The protein localises to the cytoplasm. The catalysed reaction is [ThiI sulfur-carrier protein]-S-sulfanyl-L-cysteine + a uridine in tRNA + 2 reduced [2Fe-2S]-[ferredoxin] + ATP + H(+) = [ThiI sulfur-carrier protein]-L-cysteine + a 4-thiouridine in tRNA + 2 oxidized [2Fe-2S]-[ferredoxin] + AMP + diphosphate. The enzyme catalyses [ThiS sulfur-carrier protein]-C-terminal Gly-Gly-AMP + S-sulfanyl-L-cysteinyl-[cysteine desulfurase] + AH2 = [ThiS sulfur-carrier protein]-C-terminal-Gly-aminoethanethioate + L-cysteinyl-[cysteine desulfurase] + A + AMP + 2 H(+). It functions in the pathway cofactor biosynthesis; thiamine diphosphate biosynthesis. Functionally, catalyzes the ATP-dependent transfer of a sulfur to tRNA to produce 4-thiouridine in position 8 of tRNAs, which functions as a near-UV photosensor. Also catalyzes the transfer of sulfur to the sulfur carrier protein ThiS, forming ThiS-thiocarboxylate. This is a step in the synthesis of thiazole, in the thiamine biosynthesis pathway. The sulfur is donated as persulfide by IscS. The polypeptide is Probable tRNA sulfurtransferase (Moorella thermoacetica (strain ATCC 39073 / JCM 9320)).